Consider the following 456-residue polypeptide: MPDIHIKNTRIYYNNSLQPAEIIIEHGKITKIGKDFRVSSSDMVIDAKGSLTLPAGIDVHVHFREPGMTLKENWYTGSCAAAAGGIATVIDQPNTIPPTTDRRSFEQKLELARKKSIVDFGINGGVTGNIEKLKELWRLGVTAFGEIFMAESTGGLNIKEEDFEEALAEIKRLGALATIHAEDEKMRLELEQLLKGDVSCDYHSKVRPNACEASAVQCALEIISRLGVKAHFCHLSTLEAVGMIRKEKYLAKRENKEPLFTCEVTPHHLFLSTRDWERLGVFGKMNPPLRGSHSIKALVNGLNDGTIDMVASDHAPHLESEKGPDIRAAPSGVPGVETLMPLMLAAVRKNILPLAKMIMLTSWNPARAFGLDLLGKGKLEVSYDADLMIVDPRNLQPVRADMLHSKAGWTPFEGIDAVFPEYTLSRGEVIWMEESINAKPGRGKFLEGKGKMSEED.

Zn(2+) contacts are provided by H60 and H62. Substrate contacts are provided by residues 62 to 64 and N94; that span reads HFR. The Zn(2+) site is built by E146, H180, H234, and D313. D313 is a catalytic residue. H317 is a substrate binding site.

Belongs to the metallo-dependent hydrolases superfamily. DHOase family. Class I DHOase subfamily. It depends on Zn(2+) as a cofactor.

The catalysed reaction is (S)-dihydroorotate + H2O = N-carbamoyl-L-aspartate + H(+). The protein operates within pyrimidine metabolism; UMP biosynthesis via de novo pathway; (S)-dihydroorotate from bicarbonate: step 3/3. Its function is as follows. Catalyzes the reversible cyclization of carbamoyl aspartate to dihydroorotate. The sequence is that of Dihydroorotase from Methanosarcina mazei (strain ATCC BAA-159 / DSM 3647 / Goe1 / Go1 / JCM 11833 / OCM 88) (Methanosarcina frisia).